The chain runs to 263 residues: Outer membrane protein OmpK (263 aa).

A signal peptide spans 1–20 (MRKSLLALSLLAATSAPVLA).

Belongs to the nucleoside-specific channel-forming outer membrane porin (Tsx) (TC 1.B.10) family.

It is found in the cell outer membrane. In terms of biological role, serves as receptor for a broad-host-range vibriophage, KVP40. This chain is Outer membrane protein OmpK, found in Vibrio parahaemolyticus.